An 876-amino-acid polypeptide reads, in one-letter code: Aspartate--tRNA(Asp/Asn) ligase (876 aa).

Positions 1–278 (MAATDTPWRP…FGFKRAYEGF (278 aa)) are unknown. The tract at residues 279 to 876 (MHVYRSHTCG…PKPKKEVKEG (598 aa)) is aspartyl-tRNA synthetase. Glutamate 453 provides a ligand contact to L-aspartate. Residues 477-480 (QQFK) are aspartate. Positions 499 and 729 each coordinate L-aspartate. 499 to 501 (RDE) lines the ATP pocket. Glutamate 763 serves as a coordination point for ATP. Arginine 770 contacts L-aspartate. 815-818 (GVDR) is an ATP binding site.

Belongs to the class-II aminoacyl-tRNA synthetase family. Type 1 subfamily. As to quaternary structure, homodimer.

Its subcellular location is the cytoplasm. The catalysed reaction is tRNA(Asx) + L-aspartate + ATP = L-aspartyl-tRNA(Asx) + AMP + diphosphate. Aspartyl-tRNA synthetase with relaxed tRNA specificity since it is able to aspartylate not only its cognate tRNA(Asp) but also tRNA(Asn). Reaction proceeds in two steps: L-aspartate is first activated by ATP to form Asp-AMP and then transferred to the acceptor end of tRNA(Asp/Asn). The sequence is that of Aspartate--tRNA(Asp/Asn) ligase (aspS) from Paramagnetospirillum magneticum (strain ATCC 700264 / AMB-1) (Magnetospirillum magneticum).